The primary structure comprises 784 residues: PWWP domain-containing protein 2A (784 aa).

The span at 1-10 (MAAVAAAPGP) shows a compositional bias: low complexity. Disordered stretches follow at residues 1–29 (MAAVAAAPGPGEAGESEQDSKTTPGEWRL), 399–443 (DHKV…KTQL), 468–570 (EKAQ…EIQD), and 609–655 (SSAS…SKEE). Residues 399 to 412 (DHKVNGKGQHESQK) are compositionally biased toward basic and acidic residues. A compositionally biased stretch (polar residues) spans 433-442 (PSQTSAAKTQ). The PWWP domain maps to 684–744 (VGDIVWAKIY…LSQLAPFLEN (61 aa)).

The protein resides in the nucleus. In terms of biological role, H2A.Z-specific chromatin binding protein which plays an important role in the neural crest cell differentiation and/or migration during early development and is essential for the development of the head and eye. Acts as an adapter between distinct nucleosome components (H3K36me3 or H2A.Z) and chromatin-modifying complexes, contributing to the regulation of the levels of histone acetylation at actively transcribed genes. This chain is PWWP domain-containing protein 2A (pwwp2a), found in Xenopus laevis (African clawed frog).